Here is a 154-residue protein sequence, read N- to C-terminus: uncharacterized protein (154 aa).

12–19 (GSSDVGKT) contacts GTP. In terms of domain architecture, G spans 17–112 (GKTTLMENLI…KIPYGIFINK (96 aa)).

The protein to M.thermoautotrophicum MTH765.

This is an uncharacterized protein from Methanocaldococcus jannaschii (strain ATCC 43067 / DSM 2661 / JAL-1 / JCM 10045 / NBRC 100440) (Methanococcus jannaschii).